Consider the following 135-residue polypeptide: uncharacterized protein (135 aa).

Residues 68–135 are a coiled coil; that stretch reads DEVDNYIRVF…KKESEDEDEL (68 aa). Residues 88 to 135 are disordered; it reads EKIVGKPPKSTSAPDIDELEEEPDEETEEKSEEKTEKKKKESEDEDEL. The segment covering 102-117 has biased composition (acidic residues); it reads DIDELEEEPDEETEEK. Positions 118–129 are enriched in basic and acidic residues; sequence SEEKTEKKKKES.

This is an uncharacterized protein from Acidianus hospitalis (AFV-1).